A 322-amino-acid polypeptide reads, in one-letter code: MSELYDITIVGGGPVGLFAAFYAHLRQAKVKIIDSLPQLGGQPAILYPEKKILDVPGFTNLTGEELTQRLIEQLETFQTEICLNETVLDIVKGEEGFTITTSKAKHQTKTIIIAMGGGAFKPRALELDDAESYSNLHYHVSNINQYAGKKVVVLGGGDSAVDWALAFEKIAETSLVHRRDNFRALEHSVEELKASSVEIKTPFVPSRLVGENGKITHLEISQVKGEESQLLPLDHLFVNYGFKSSVGNLKNWGLELNRHKILVNSKQETSVPGIYAAGDCCSYEGKIDLIATGLGEAPTAVNNAINHIYPDQKVQPKHSTSL.

D34, Q42, Y47, V87, F120, D279, and T320 together coordinate FAD.

This sequence belongs to the ferredoxin--NADP reductase type 2 family. As to quaternary structure, homodimer. FAD is required as a cofactor.

The catalysed reaction is 2 reduced [2Fe-2S]-[ferredoxin] + NADP(+) + H(+) = 2 oxidized [2Fe-2S]-[ferredoxin] + NADPH. In Streptococcus gordonii (strain Challis / ATCC 35105 / BCRC 15272 / CH1 / DL1 / V288), this protein is Ferredoxin--NADP reductase.